A 385-amino-acid polypeptide reads, in one-letter code: uncharacterized protein (385 aa).

It belongs to the phage portal family. HK97 subfamily.

This is an uncharacterized protein from Rickettsia bellii (strain RML369-C).